Here is a 289-residue protein sequence, read N- to C-terminus: Serine/threonine-protein phosphatase Pgam5, mitochondrial (289 aa).

Belongs to the phosphoglycerate mutase family. BPG-dependent PGAM subfamily. In terms of assembly, interacts with Pk92B/ASK1.

The protein localises to the mitochondrion outer membrane. It carries out the reaction O-phospho-L-seryl-[protein] + H2O = L-seryl-[protein] + phosphate. The enzyme catalyses O-phospho-L-threonyl-[protein] + H2O = L-threonyl-[protein] + phosphate. Its function is as follows. Displays phosphatase activity for serine/threonine residues, and dephosphorylates and activates Pk92B kinase. Has apparently no phosphoglycerate mutase activity. The protein is Serine/threonine-protein phosphatase Pgam5, mitochondrial of Drosophila mojavensis (Fruit fly).